We begin with the raw amino-acid sequence, 379 residues long: tRNA (guanine(26)-N(2))-dimethyltransferase (379 aa).

Residues 1–26 form a disordered region; sequence MECREITEGSTTFTAPVQDETTQFPP. Residues 4–369 enclose the Trm1 methyltransferase domain; sequence REITEGSTTF…APLPLIEEKI (366 aa). Over residues 8–25 the composition is skewed to polar residues; that stretch reads EGSTTFTAPVQDETTQFP. S-adenosyl-L-methionine contacts are provided by Arg-41, Arg-66, Asp-82, Asp-108, and Ala-109. Zn(2+) is bound by residues Cys-237, Cys-240, Cys-257, and Cys-260.

The protein belongs to the class I-like SAM-binding methyltransferase superfamily. Trm1 family.

It catalyses the reaction guanosine(26) in tRNA + 2 S-adenosyl-L-methionine = N(2)-dimethylguanosine(26) in tRNA + 2 S-adenosyl-L-homocysteine + 2 H(+). Functionally, dimethylates a single guanine residue at position 26 of a number of tRNAs using S-adenosyl-L-methionine as donor of the methyl groups. In Methanocorpusculum labreanum (strain ATCC 43576 / DSM 4855 / Z), this protein is tRNA (guanine(26)-N(2))-dimethyltransferase.